Consider the following 161-residue polypeptide: SsrA-binding protein (161 aa).

The protein belongs to the SmpB family.

Its subcellular location is the cytoplasm. Required for rescue of stalled ribosomes mediated by trans-translation. Binds to transfer-messenger RNA (tmRNA), required for stable association of tmRNA with ribosomes. tmRNA and SmpB together mimic tRNA shape, replacing the anticodon stem-loop with SmpB. tmRNA is encoded by the ssrA gene; the 2 termini fold to resemble tRNA(Ala) and it encodes a 'tag peptide', a short internal open reading frame. During trans-translation Ala-aminoacylated tmRNA acts like a tRNA, entering the A-site of stalled ribosomes, displacing the stalled mRNA. The ribosome then switches to translate the ORF on the tmRNA; the nascent peptide is terminated with the 'tag peptide' encoded by the tmRNA and targeted for degradation. The ribosome is freed to recommence translation, which seems to be the essential function of trans-translation. The sequence is that of SsrA-binding protein from Psychromonas ingrahamii (strain DSM 17664 / CCUG 51855 / 37).